Here is a 1436-residue protein sequence, read N- to C-terminus: Pleiotropic drug resistance protein 1 (1436 aa).

In terms of domain architecture, ABC transporter 1 spans 165–438 (LDSIHILPSK…FESMGFKCPE (274 aa)). Residue 198–205 (GPPGSGKT) coordinates ATP. One can recognise an ABC transmembrane type-2 1 domain in the interval 516 to 729 (QLLKVCTERE…SVNAILVNEF (214 aa)). Transmembrane regions (helical) follow at residues 534-554 (FVYLFKFFQLLIIALMTMTIF), 567-587 (GGIYSGALFFVVIMIMFNGLS), 622-642 (IPVTFAEVGMWVFLTYYVMGF), 653-673 (FLLLLLVNQMASALFRFIAAV), 679-699 (VASTFGAFALLLQFALGGFIL), 707-727 (WWIWGYWTSPLMYSVNAILVN), and 764-784 (IGVGALAGFIVMFNIAYSVAL). A disordered region spans residues 796-826 (TISDESENNESESSPQITSTQEGDSASENKK). Residues 810-821 (PQITSTQEGDSA) show a composition bias toward polar residues. The 253-residue stretch at 838-1090 (ITFDEVVYSV…HLIKYFESIP (253 aa)) folds into the ABC transporter 2 domain. 883 to 890 (GVSGAGKT) provides a ligand contact to ATP. An ABC transmembrane type-2 2 domain is found at 1163–1377 (TQCMACLWKQ…TLYGLVASQF (215 aa)). 7 consecutive transmembrane segments (helical) span residues 1184 to 1204 (AVRLIFTTFIALIFGTMFWDI), 1214 to 1234 (LVNAMGSMYAAVLFLGVQNSS), 1270 to 1290 (IPYIFVQATVYGLIVYSMIGF), 1301 to 1321 (FFFMFFTFLYFTFFGMMTVAV), 1327 to 1347 (VASIVAGFFYTVWNLFSGFIV), 1358 to 1378 (WYYWGCPIAWTLYGLVASQFG), and 1408 to 1428 (VVAAVIVAFAVVFAFTFALGI).

It belongs to the ABC transporter superfamily. ABCG family. PDR (TC 3.A.1.205) subfamily. Roots, petals and leaf epidermis, where it is confined to glandular trichomes (at protein level).

Its subcellular location is the cell membrane. Functionally, excretes secondary metabolites such as terpenes. Involved in both constitutive and jasmonic acid-dependent induced defense. Confers some resistance to sclareol and B.cinerea. The polypeptide is Pleiotropic drug resistance protein 1 (PDR1) (Nicotiana plumbaginifolia (Leadwort-leaved tobacco)).